A 574-amino-acid polypeptide reads, in one-letter code: Phosphatidylinositol 4-kinase gamma 3 (574 aa).

2 consecutive Ubiquitin-like domains span residues 32–109 (PILV…SDLQ) and 110–188 (AISV…AKVR). A PI3K/PI4K catalytic domain is found at 257–555 (GNGPIRSSDG…IVPTETTEDE (299 aa)). Positions 263–269 (SSDGSGG) are G-loop. Residues 264–270 (SDGSGGA), lysine 286, and 381–384 (QMFV) contribute to the ATP site. The segment at 414-422 (ANADRHAGN) is catalytic loop. The segment at 438 to 464 (PIDHGYCFPNKFEDCTFEWLYWPQAKE) is activation loop. Aspartate 440 is an ATP binding site.

Belongs to the PI3/PI4-kinase family. Type II PI4K subfamily.

The catalysed reaction is a 1,2-diacyl-sn-glycero-3-phospho-(1D-myo-inositol) + ATP = a 1,2-diacyl-sn-glycero-3-phospho-(1D-myo-inositol 4-phosphate) + ADP + H(+). In terms of biological role, the phosphorylation of phosphatidylinositol (PI) to PI4P is the first committed step in the generation of phosphatidylinositol 4,5-bisphosphate (PIP2), a precursor of the second messenger inositol 1,4,5-trisphosphate (InsP3). The sequence is that of Phosphatidylinositol 4-kinase gamma 3 (PI4KG3) from Arabidopsis thaliana (Mouse-ear cress).